A 560-amino-acid chain; its full sequence is 2-succinyl-5-enolpyruvyl-6-hydroxy-3-cyclohexene-1-carboxylate synthase (560 aa).

The protein belongs to the TPP enzyme family. MenD subfamily. In terms of assembly, homodimer. It depends on Mg(2+) as a cofactor. The cofactor is Mn(2+). Requires thiamine diphosphate as cofactor.

It carries out the reaction isochorismate + 2-oxoglutarate + H(+) = 5-enolpyruvoyl-6-hydroxy-2-succinyl-cyclohex-3-ene-1-carboxylate + CO2. The protein operates within quinol/quinone metabolism; 1,4-dihydroxy-2-naphthoate biosynthesis; 1,4-dihydroxy-2-naphthoate from chorismate: step 2/7. It functions in the pathway quinol/quinone metabolism; menaquinone biosynthesis. Catalyzes the thiamine diphosphate-dependent decarboxylation of 2-oxoglutarate and the subsequent addition of the resulting succinic semialdehyde-thiamine pyrophosphate anion to isochorismate to yield 2-succinyl-5-enolpyruvyl-6-hydroxy-3-cyclohexene-1-carboxylate (SEPHCHC). The polypeptide is 2-succinyl-5-enolpyruvyl-6-hydroxy-3-cyclohexene-1-carboxylate synthase (Staphylococcus saprophyticus subsp. saprophyticus (strain ATCC 15305 / DSM 20229 / NCIMB 8711 / NCTC 7292 / S-41)).